The chain runs to 83 residues: uncharacterized protein (83 aa).

Belongs to the BolA/IbaG family.

This is an uncharacterized protein from Acinetobacter guillouiae (Acinetobacter genomosp. 11).